We begin with the raw amino-acid sequence, 248 residues long: tRNA (guanine-N(1)-)-methyltransferase (248 aa).

S-adenosyl-L-methionine-binding positions include G113 and V133 to L138.

Belongs to the RNA methyltransferase TrmD family. Homodimer.

Its subcellular location is the cytoplasm. The catalysed reaction is guanosine(37) in tRNA + S-adenosyl-L-methionine = N(1)-methylguanosine(37) in tRNA + S-adenosyl-L-homocysteine + H(+). Its function is as follows. Specifically methylates guanosine-37 in various tRNAs. The chain is tRNA (guanine-N(1)-)-methyltransferase from Shewanella sp. (strain W3-18-1).